A 43-amino-acid polypeptide reads, in one-letter code: Protein PsbN (43 aa).

A helical transmembrane segment spans residues 4 to 24; it reads ATIIVIFVSSLLVGITAYSVY.

Belongs to the PsbN family.

The protein resides in the plastid. The protein localises to the chloroplast thylakoid membrane. Functionally, may play a role in photosystem I and II biogenesis. In Thalassiosira pseudonana (Marine diatom), this protein is Protein PsbN.